The chain runs to 160 residues: MSEPLTIGIKRLPHGADLPLPAYQSAGAAGLDLLAAIAPGSKLTLEPGERRLVPTGLVLQIPPSHEGQLRPRSGLALKAGVTVLNAPGTIDSDYRGEVGVLLINFGAEPFEIARGERIAQLIIAPVTRAVLVETDGLEATARGAGGFGSTGAAAIGETRR.

Substrate is bound by residues 72–74 (RSG), Asn-85, and 89–91 (TID).

This sequence belongs to the dUTPase family. The cofactor is Mg(2+).

It carries out the reaction dUTP + H2O = dUMP + diphosphate + H(+). The protein operates within pyrimidine metabolism; dUMP biosynthesis; dUMP from dCTP (dUTP route): step 2/2. Its function is as follows. This enzyme is involved in nucleotide metabolism: it produces dUMP, the immediate precursor of thymidine nucleotides and it decreases the intracellular concentration of dUTP so that uracil cannot be incorporated into DNA. The chain is Deoxyuridine 5'-triphosphate nucleotidohydrolase from Methylocella silvestris (strain DSM 15510 / CIP 108128 / LMG 27833 / NCIMB 13906 / BL2).